Consider the following 317-residue polypeptide: Ribosomal lysine N-methyltransferase 5 (317 aa).

Residues Trp87, Gly141–Gly143, Asp163, Trp214, and Leu237 contribute to the S-adenosyl-L-methionine site.

The protein belongs to the class I-like SAM-binding methyltransferase superfamily. RKM5 family.

S-adenosyl-L-methionine-dependent protein-lysine N-methyltransferase that methylates 60S ribosomal protein L1. This is Ribosomal lysine N-methyltransferase 5 (RKM5) from Eremothecium gossypii (strain ATCC 10895 / CBS 109.51 / FGSC 9923 / NRRL Y-1056) (Yeast).